We begin with the raw amino-acid sequence, 166 residues long: 2-amino-4-hydroxy-6-hydroxymethyldihydropteridine pyrophosphokinase (166 aa).

It belongs to the HPPK family.

The catalysed reaction is 6-hydroxymethyl-7,8-dihydropterin + ATP = (7,8-dihydropterin-6-yl)methyl diphosphate + AMP + H(+). Its pathway is cofactor biosynthesis; tetrahydrofolate biosynthesis; 2-amino-4-hydroxy-6-hydroxymethyl-7,8-dihydropteridine diphosphate from 7,8-dihydroneopterin triphosphate: step 4/4. In terms of biological role, catalyzes the transfer of pyrophosphate from adenosine triphosphate (ATP) to 6-hydroxymethyl-7,8-dihydropterin, an enzymatic step in folate biosynthesis pathway. The protein is 2-amino-4-hydroxy-6-hydroxymethyldihydropteridine pyrophosphokinase (folK) of Streptococcus pyogenes serotype M1.